Here is a 509-residue protein sequence, read N- to C-terminus: Maturase K (509 aa).

It belongs to the intron maturase 2 family. MatK subfamily.

It is found in the plastid. Its subcellular location is the chloroplast. Functionally, usually encoded in the trnK tRNA gene intron. Probably assists in splicing its own and other chloroplast group II introns. In Banksia cuneata (Quairading banksia), this protein is Maturase K.